The chain runs to 237 residues: D-aminoacyl-tRNA deacylase (237 aa).

Belongs to the DtdA deacylase family. Monomer. Zn(2+) serves as cofactor.

It catalyses the reaction a D-aminoacyl-tRNA + H2O = a tRNA + a D-alpha-amino acid + H(+). The catalysed reaction is glycyl-tRNA(Ala) + H2O = tRNA(Ala) + glycine + H(+). In terms of biological role, D-aminoacyl-tRNA deacylase with broad substrate specificity. By recycling D-aminoacyl-tRNA to D-amino acids and free tRNA molecules, this enzyme counteracts the toxicity associated with the formation of D-aminoacyl-tRNA entities in vivo. In Sulfurisphaera tokodaii (strain DSM 16993 / JCM 10545 / NBRC 100140 / 7) (Sulfolobus tokodaii), this protein is D-aminoacyl-tRNA deacylase.